Here is a 104-residue protein sequence, read N- to C-terminus: MAVIADPETAQGFRLAGLEGYGASSAEEAQSLLETLVERGGYALVAVDEALLSDPERAVERLMRGRDLPVLLPIAGLKEAFQGHDVEGYMRELVRKTIGFDIKL.

The protein belongs to the V-ATPase F subunit family.

Functionally, produces ATP from ADP in the presence of a proton gradient across the membrane. The protein is V-type ATP synthase subunit F of Thermus thermophilus (strain ATCC BAA-163 / DSM 7039 / HB27).